A 555-amino-acid polypeptide reads, in one-letter code: Synaptotagmin-14 (555 aa).

Residues 1-24 lie on the Extracellular side of the membrane; it reads MAIEGGERTCGVHELICIRKVSPE. The helical; Signal-anchor for type III membrane protein transmembrane segment at 25–47 threads the bilayer; sequence AVGFLSAVGVFIVLMLLLFLYIN. The Cytoplasmic segment spans residues 48-555; sequence KKFCFENVGG…VCRWHALLES (508 aa). 3 disordered regions span residues 76 to 97, 157 to 179, and 205 to 258; these read YNSYMDRDEPGSSSESEDEALG, TPPLDELQPPPYQDDSGSPHLSC, and CPSE…PEPE. The segment covering 211–224 has biased composition (basic and acidic residues); the sequence is TGHEAESYHNKGYE. 2 consecutive C2 domains span residues 260 to 379 and 415 to 550; these read KYGT…SLPV and SVPE…CRWH.

This sequence belongs to the synaptotagmin family. As to quaternary structure, homodimer. Can also form heterodimers. Expressed in heart and testis. Expressed in brain (especially in the cerebellum).

It is found in the membrane. In terms of biological role, may be involved in the trafficking and exocytosis of secretory vesicles in non-neuronal tissues. Is Ca(2+)-independent. This chain is Synaptotagmin-14 (Syt14), found in Mus musculus (Mouse).